The following is a 306-amino-acid chain: Acetyl-coenzyme A carboxylase carboxyl transferase subunit beta (306 aa).

One can recognise a CoA carboxyltransferase N-terminal domain in the interval 28-297 (LWIKCPDTGQ…TPAGKPSTPV (270 aa)). A disordered region spans residues 287 to 306 (QTPAGKPSTPVAPEPVPDAA). The segment covering 296-306 (PVAPEPVPDAA) has biased composition (pro residues).

Belongs to the AccD/PCCB family. In terms of assembly, acetyl-CoA carboxylase is a heterohexamer composed of biotin carboxyl carrier protein (AccB), biotin carboxylase (AccC) and two subunits each of ACCase subunit alpha (AccA) and ACCase subunit beta (AccD).

It is found in the cytoplasm. The enzyme catalyses N(6)-carboxybiotinyl-L-lysyl-[protein] + acetyl-CoA = N(6)-biotinyl-L-lysyl-[protein] + malonyl-CoA. Its pathway is lipid metabolism; malonyl-CoA biosynthesis; malonyl-CoA from acetyl-CoA: step 1/1. Component of the acetyl coenzyme A carboxylase (ACC) complex. Biotin carboxylase (BC) catalyzes the carboxylation of biotin on its carrier protein (BCCP) and then the CO(2) group is transferred by the transcarboxylase to acetyl-CoA to form malonyl-CoA. The chain is Acetyl-coenzyme A carboxylase carboxyl transferase subunit beta from Methylorubrum populi (strain ATCC BAA-705 / NCIMB 13946 / BJ001) (Methylobacterium populi).